The primary structure comprises 192 residues: Putative ripening-related protein 2 (192 aa).

An N-terminal signal peptide occupies residues 1-26 (MATTNCLLALAIAGLVLVSLPGLSRG).

It belongs to the kiwellin family.

The protein localises to the secreted. The protein is Putative ripening-related protein 2 of Oryza sativa subsp. japonica (Rice).